Here is a 207-residue protein sequence, read N- to C-terminus: C-type lectin domain family 2 member D11 (207 aa).

Over 1–44 (MSAKKASQPMLNTTGSLQEGEMGKMFHGKCLRIVSPESPAKLYC) the chain is Cytoplasmic. Phosphoserine is present on residues Ser7 and Ser16. Residues 45–65 (CYGVIMVLSVAVVALSVALSV) form a helical; Signal-anchor for type II membrane protein membrane-spanning segment. The Extracellular portion of the chain corresponds to 66 to 207 (KMTPQISTIN…LQCKTPFSPM (142 aa)). The 112-residue stretch at 87–198 (VGNKCFYFSE…SCSKLNSYSL (112 aa)) folds into the C-type lectin domain. A glycan (N-linked (GlcNAc...) asparagine) is linked at Asn100.

The protein localises to the cell membrane. Receptor for KLRB1B that protects target cells against natural killer cell-mediated lysis. The protein is C-type lectin domain family 2 member D11 (Clec2d11) of Rattus norvegicus (Rat).